The sequence spans 231 residues: Putative S-adenosylmethionine-dependent methyltransferase RcsF (231 aa).

A TsaA-like domain is found at 5–142; that stretch reads VSPIGYIRSC…YVPYADAVAD (138 aa). Residues 22-24, 63-64, Arg91, and 122-125 contribute to the S-adenosyl-L-methionine site; these read PRQ, HQ, and LDGT.

This sequence belongs to the tRNA methyltransferase O family.

This is Putative S-adenosylmethionine-dependent methyltransferase RcsF (rcsF) from Pseudomonas aeruginosa (strain ATCC 15692 / DSM 22644 / CIP 104116 / JCM 14847 / LMG 12228 / 1C / PRS 101 / PAO1).